Here is a 117-residue protein sequence, read N- to C-terminus: Large ribosomal subunit protein uL24 (117 aa).

Belongs to the universal ribosomal protein uL24 family. In terms of assembly, part of the 50S ribosomal subunit.

Its function is as follows. One of two assembly initiator proteins, it binds directly to the 5'-end of the 23S rRNA, where it nucleates assembly of the 50S subunit. In terms of biological role, located at the polypeptide exit tunnel on the outside of the subunit. The sequence is that of Large ribosomal subunit protein uL24 from Methanothermobacter thermautotrophicus (strain ATCC 29096 / DSM 1053 / JCM 10044 / NBRC 100330 / Delta H) (Methanobacterium thermoautotrophicum).